The primary structure comprises 72 residues: Arrestin-E (72 aa).

It belongs to the arrestin family. As to expression, adrenal, cerebral cortex, heart, hypothalamus, intestine, liver, lung, pituitary, retina and testis.

This chain is Arrestin-E (Ear), found in Rattus norvegicus (Rat).